We begin with the raw amino-acid sequence, 129 residues long: Cytochrome c oxidase subunit 13, mitochondrial (129 aa).

Residues 1–9 (MFRQCAKRY) constitute a mitochondrion transit peptide. The Mitochondrial matrix segment spans residues 10–43 (ASSLPPNALKPAFGPPDKVAAQKFKESLMATEKH). Residues 44–71 (AKDTSNMWVKISVWVALPAIALTAVNTY) traverse the membrane as a helical segment. Residues 72–129 (FVEKEHAEHREHLKHVPDSEWPRDYEFMNIRSKPFFWGDGDKTLFWNPVVNRHIEHDD) lie on the Mitochondrial intermembrane side of the membrane.

The protein belongs to the cytochrome c oxidase subunit 6A family. In terms of assembly, component of the cytochrome c oxidase (complex IV, CIV), a multisubunit enzyme composed of 12 subunits. The complex is composed of a catalytic core of 3 subunits COX1, COX2 and COX3, encoded in the mitochondrial DNA, and 9 supernumerary subunits COX4, COX5A (or COX5B), COX6, COX7, COX8, COX9, COX12, COX13 and COX26, which are encoded in the nuclear genome. The complex exists as a monomer or a dimer and forms supercomplexes (SCs) in the inner mitochondrial membrane with a dimer of ubiquinol-cytochrome c oxidoreductase (cytochrome b-c1 complex, complex III, CIII), resulting in 2 different assemblies (supercomplexes III(2)IV and III(2)IV(2)). COX13 interacts with COX1 and COX3 on the intermembrane space (IMS) and COX4 on the matrix side.

Its subcellular location is the mitochondrion inner membrane. It functions in the pathway energy metabolism; oxidative phosphorylation. In terms of biological role, component of the cytochrome c oxidase, the last enzyme in the mitochondrial electron transport chain which drives oxidative phosphorylation. The respiratory chain contains 3 multisubunit complexes succinate dehydrogenase (complex II, CII), ubiquinol-cytochrome c oxidoreductase (cytochrome b-c1 complex, complex III, CIII) and cytochrome c oxidase (complex IV, CIV), that cooperate to transfer electrons derived from NADH and succinate to molecular oxygen, creating an electrochemical gradient over the inner membrane that drives transmembrane transport and the ATP synthase. Cytochrome c oxidase is the component of the respiratory chain that catalyzes the reduction of oxygen to water. Electrons originating from reduced cytochrome c in the intermembrane space (IMS) are transferred via the dinuclear copper A center (CU(A)) of COX2 and heme A of COX1 to the active site in COX1, a binuclear center (BNC) formed by heme A3 and copper B (CU(B)). The BNC reduces molecular oxygen to 2 water molecules using 4 electrons from cytochrome c in the IMS and 4 protons from the mitochondrial matrix. This chain is Cytochrome c oxidase subunit 13, mitochondrial (COX13), found in Saccharomyces cerevisiae (strain ATCC 204508 / S288c) (Baker's yeast).